We begin with the raw amino-acid sequence, 120 residues long: Large ribosomal subunit protein bL20 (120 aa).

This sequence belongs to the bacterial ribosomal protein bL20 family.

Its function is as follows. Binds directly to 23S ribosomal RNA and is necessary for the in vitro assembly process of the 50S ribosomal subunit. It is not involved in the protein synthesizing functions of that subunit. This Desulfitobacterium hafniense (strain DSM 10664 / DCB-2) protein is Large ribosomal subunit protein bL20.